We begin with the raw amino-acid sequence, 452 residues long: NADH-ubiquinone oxidoreductase chain 4 (452 aa).

14 helical membrane-spanning segments follow: residues 4-24 (LVLG…SMVW), 29-49 (VGSV…MTIS), 59-79 (FVSL…LLAS), 88-110 (LIYQ…LAFM), 114-136 (LLLF…TRWG), 144-164 (AGTY…ICLI), 182-202 (VFQL…AFLV), 221-241 (PIAG…YGMM), 252-272 (MLSS…MGGI), 282-304 (LIAY…GVAW), 309-331 (AMVL…NLWY), 345-365 (LIMI…MNMA), 390-410 (IVYM…LFGM), and 432-452 (LLTT…GLMF).

Belongs to the complex I subunit 4 family.

Its subcellular location is the mitochondrion membrane. It catalyses the reaction a ubiquinone + NADH + 5 H(+)(in) = a ubiquinol + NAD(+) + 4 H(+)(out). Its function is as follows. Core subunit of the mitochondrial membrane respiratory chain NADH dehydrogenase (Complex I) that is believed to belong to the minimal assembly required for catalysis. Complex I functions in the transfer of electrons from NADH to the respiratory chain. The immediate electron acceptor for the enzyme is believed to be ubiquinone. The polypeptide is NADH-ubiquinone oxidoreductase chain 4 (ND4) (Branchiostoma floridae (Florida lancelet)).